A 475-amino-acid chain; its full sequence is Methionine aminopeptidase 2-1 (475 aa).

The segment covering 1 to 12 (MGSKSPEGHRQT) has biased composition (basic and acidic residues). The interval 1–97 (MGSKSPEGHR…LKQSSPPRVL (97 aa)) is disordered. Residues 44-57 (NLDDDNDDDGEANE) are compositionally biased toward acidic residues. The segment covering 70–83 (KKKKRKRSKKKTKK) has biased composition (basic residues). Histidine 211 provides a ligand contact to substrate. A divalent metal cation is bound by residues aspartate 232, aspartate 243, and histidine 312. Histidine 320 contributes to the substrate binding site. Residues glutamate 345 and glutamate 456 each contribute to the a divalent metal cation site.

The protein belongs to the peptidase M24A family. Methionine aminopeptidase eukaryotic type 2 subfamily. It depends on Co(2+) as a cofactor. Requires Zn(2+) as cofactor. Mn(2+) is required as a cofactor. The cofactor is Fe(2+).

It is found in the cytoplasm. The enzyme catalyses Release of N-terminal amino acids, preferentially methionine, from peptides and arylamides.. Cotranslationally removes the N-terminal methionine from nascent proteins. The N-terminal methionine is often cleaved when the second residue in the primary sequence is small and uncharged (Met-Ala-, Cys, Gly, Pro, Ser, Thr, or Val). The protein is Methionine aminopeptidase 2-1 of Aspergillus niger (strain ATCC MYA-4892 / CBS 513.88 / FGSC A1513).